Consider the following 135-residue polypeptide: Photosystem II extrinsic protein U (135 aa).

Positions 1-29 (MKRLLSWLTGALLMAGLLAGLILPGSVHA) are cleaved as a signal peptide.

This sequence belongs to the PsbU family. As to quaternary structure, PSII is composed of 1 copy each of membrane proteins PsbA, PsbB, PsbC, PsbD, PsbE, PsbF, PsbH, PsbI, PsbJ, PsbK, PsbL, PsbM, PsbT, PsbX, PsbY, Psb30/Ycf12, peripheral proteins PsbO, CyanoQ (PsbQ), PsbU, PsbV and a large number of cofactors. It forms dimeric complexes.

The protein localises to the cellular thylakoid membrane. Its function is as follows. One of the extrinsic, lumenal subunits of photosystem II (PSII). PSII is a light-driven water plastoquinone oxidoreductase, using light energy to abstract electrons from H(2)O, generating a proton gradient subsequently used for ATP formation. The extrinsic proteins stabilize the structure of photosystem II oxygen-evolving complex (OEC), the ion environment of oxygen evolution and protect the OEC against heat-induced inactivation. The polypeptide is Photosystem II extrinsic protein U (Parasynechococcus marenigrum (strain WH8102)).